Consider the following 89-residue polypeptide: Arminin 375 (89 aa).

Residues 1-18 (MKAVFAILFLAFIALTYA) form the signal peptide. A propeptide spanning residues 19-57 (KSYDEVKEEIKNEVEREIFEDLEEESDELDNYVEESNDA) is cleaved from the precursor. Alanine 86 carries the post-translational modification Alanine amide.

The protein belongs to the arminin family. In terms of tissue distribution, expressed in entodermal epithelium along the body column.

The protein resides in the secreted. It is found in the target cell membrane. Functionally, antimicrobial peptide with a broad-spectrum antimicrobial activity. Keeps its antibacterial activity under a wide range of salt concentrations that mimic physiological conditions of human blood, which is surprising, since Hydra is an obligate freshwater animal with nearly no salt tolerance. Does not affect red blood cells. The polypeptide is Arminin 375 (Hydra oligactis (Brown hydra)).